Reading from the N-terminus, the 349-residue chain is MGAQPEQTQKPSSRVQTLFKRVKAFFTKTGPPPPPPAPSRNLGCTHVYGYVFGHLGEREPEHSPSQQVLDTGEQLMVPVDVLEVDNEGALWKFLLSGAMAGAVSRTGTAPLDRAKVYMQVYSSKKNFMNLLGGLRSLIQEGGIRSLWRGNGINVLKIAPEYAIKFSVFEQCKNYFCGVHESPPFQERLLAGSLAVATSQTLINPMEVLKTRLTLRRTGQYKGLLDCARQILEQEGTRALYRGYLPNMLGIIPYACTDLAVYEMLNCLWLKSGRDMKDPSGLVSLSSVTLSTTCGQMASYPLTLVRTRMQAQGQLGPFSNLAYHDPLPLLSELSHDPPKHTQTDSQTLHI.

The next 4 helical transmembrane spans lie at 88-104 (GALW…GAVS), 149-168 (GNGI…FSVF), 188-205 (LLAG…INPM), and 243-261 (YLPN…LAVY). Solcar repeat units follow at residues 88–174 (GALW…CKNY) and 182–267 (PPFQ…LNCL).

Belongs to the mitochondrial carrier (TC 2.A.29) family.

Its subcellular location is the mitochondrion inner membrane. It carries out the reaction Mg(2+)(out) + phosphate(in) + ATP(out) = Mg(2+)(in) + phosphate(out) + ATP(in). It catalyses the reaction ADP(out) + phosphate(in) + H(+)(out) = ADP(in) + phosphate(out) + H(+)(in). Functionally, calcium-independent ATP-Mg/Pi exchanger that catalyzes the electroneutral exchange of Mg-ATP or free ADP against an hydrogenphosphate and participates in the net transport of adenine nucleotides across the mitochondria inner membrane. The polypeptide is Mitochondrial carrier protein SCaMC-3L (Bos taurus (Bovine)).